The following is a 199-amino-acid chain: Outer-membrane lipoprotein LolB (199 aa).

The signal sequence occupies residues Met-1–Gly-28. The N-palmitoyl cysteine moiety is linked to residue Cys-29. Cys-29 is lipidated: S-diacylglycerol cysteine.

This sequence belongs to the LolB family. In terms of assembly, monomer.

It is found in the cell outer membrane. In terms of biological role, plays a critical role in the incorporation of lipoproteins in the outer membrane after they are released by the LolA protein. In Bordetella bronchiseptica (strain ATCC BAA-588 / NCTC 13252 / RB50) (Alcaligenes bronchisepticus), this protein is Outer-membrane lipoprotein LolB.